We begin with the raw amino-acid sequence, 426 residues long: Phytoene synthase 3, chloroplastic (426 aa).

The N-terminal 52 residues, 1-52, are a transit peptide targeting the chloroplast; that stretch reads MMSTSRAVKSPACAARRRQWSADAPNRTATFLACRHGRRLGGGGGAPCSVRA.

It belongs to the phytoene/squalene synthase family. In terms of tissue distribution, expressed in roots and endosperm.

Its subcellular location is the plastid. The protein resides in the chloroplast. The protein localises to the plastoglobule. It carries out the reaction 2 (2E,6E,10E)-geranylgeranyl diphosphate = 15-cis-phytoene + 2 diphosphate. In terms of biological role, catalyzes the conversion of geranylgeranyl diphosphate to phytoene. Mediates the first committed step in carotenoid biosynthesis. May play a role in regulating carotenoid flux in response to abiotic stress in roots. May control flux to carotenoid precursors that are required for abiotic stress-induced abscisic acid (ABA) formation in roots. In Zea mays (Maize), this protein is Phytoene synthase 3, chloroplastic.